A 264-amino-acid chain; its full sequence is Orotidine 5'-phosphate decarboxylase (264 aa).

Residues Asp-37, 59–61 (KTH), 91–100 (DRKFADIGNT), Tyr-217, and Arg-235 contribute to the substrate site. Lys-93 acts as the Proton donor in catalysis.

The protein belongs to the OMP decarboxylase family.

The catalysed reaction is orotidine 5'-phosphate + H(+) = UMP + CO2. It participates in pyrimidine metabolism; UMP biosynthesis via de novo pathway; UMP from orotate: step 2/2. The polypeptide is Orotidine 5'-phosphate decarboxylase (URA3) (Torulaspora delbrueckii (Yeast)).